The chain runs to 99 residues: Putative endopeptidase RzpR (99 aa).

This Escherichia coli (strain K12) protein is Putative endopeptidase RzpR (rzpR).